The sequence spans 2364 residues: Spectrin beta chain, non-erythrocytic 1 (2364 aa).

T2 is subject to N-acetylthreonine. The actin-binding stretch occupies residues 2–275 (TTTVATDYDN…IITYVVTYYH (274 aa)). Residues I14 and S36 each carry the phosphoserine modification. Calponin-homology (CH) domains lie at 54-158 (AVQK…LRFQ) and 173-278 (KSAK…HYFS). K90 bears the N6-acetyllysine mark. S228 bears the Phosphoserine mark. Spectrin repeat units follow at residues 303-411 (MIEK…LALR), 423-525 (LARR…QRLE), 530-636 (LQKI…RLEE), 639-742 (RLWK…RLEE), 745-847 (LLHQ…ALQD), 850-952 (ALYK…DALL), 957-1060 (IQNY…SLGE), 1063-1166 (KLQQ…NLLS), 1170-1258 (AYQQ…DRHR), 1276-1376 (DLQK…AQRL), 1381-1482 (KAEL…HNLL), 1486-1590 (EIHQ…RLEE), 1592-1696 (HRAQ…KLDE), 1698-1801 (HRLF…TQIL), and 1805-1907 (YELH…RVRL). A phosphoserine mark is found at S817, S825, S903, S1057, S1076, S1079, and S1237. S1388, S1447, and S1557 each carry phosphoserine. Residues 1563 to 2093 (IRQRLADLKQ…LLEVRRQQEE (531 aa)) are interaction with ANK2. Phosphotyrosine is present on Y1805. Residues K1815, K1913, and K1989 each carry the N6-acetyllysine modification. 2 Spectrin repeats span residues 1914–2014 (FRFF…EWLR) and 2018–2097 (EVHQ…EERK). Positions 2089-2196 (RQQEEEERKR…TLPARTQETP (108 aa)) are disordered. S2102, S2128, and S2138 each carry phosphoserine. Positions 2115–2131 (SQQQWDTSKGEQVSQNG) are enriched in polar residues. Residues 2145–2166 (VDTSEMVNGATEQRTSSKESSP) show a composition bias toward polar residues. T2147 is modified (phosphothreonine). S2148 is modified (phosphoserine). Residues 2149–2177 (EMVNGATEQRTSSKESSPIPSPTSDRKAK) form a mediates interaction with CAMSAP1 region. Residue T2159 is modified to Phosphothreonine. Phosphoserine is present on residues S2160, S2161, S2164, S2165, and S2169. T2171 is subject to Phosphothreonine. Residues S2172 and S2184 each carry the phosphoserine modification. Over residues 2184–2196 (SAATLPARTQETP) the composition is skewed to polar residues. Phosphothreonine is present on residues T2187 and T2195. In terms of domain architecture, PH spans 2197–2307 (SAQMEGFLNR…WIQAISSAIS (111 aa)). The tract at residues 2309-2364 (DKHEVSASTQSTPASSRAQTLPTSVVTITSESSPGKREKDKEKDKEKRFSLFGKKK) is disordered. A phosphoserine mark is found at S2314 and S2319. Residues 2314–2341 (SASTQSTPASSRAQTLPTSVVTITSESS) show a composition bias toward polar residues. The residue at position 2320 (T2320) is a Phosphothreonine. The O-linked (GlcNAc) serine glycan is linked to S2324. T2328 bears the Phosphothreonine mark. S2340 and S2341 each carry phosphoserine. Positions 2342-2357 (PGKREKDKEKDKEKRF) are enriched in basic and acidic residues.

The protein belongs to the spectrin family. Interacts with CAMSAP1. Interacts with ANK2. Interacts with CPNE4 (via VWFA domain). Like erythrocyte spectrin, the spectrin-like proteins are capable to form dimers which can further associate to tetramers. Can form heterodimers with SPTAN1. Isoform Short cannot bind to the axonal protein fodaxin. In terms of tissue distribution, isoform 2 is present in brain, lung and kidney (at protein level).

The protein localises to the cytoplasm. Its subcellular location is the cytoskeleton. It localises to the myofibril. It is found in the sarcomere. The protein resides in the m line. The protein localises to the cytosol. Its subcellular location is the cell membrane. In terms of biological role, fodrin, which seems to be involved in secretion, interacts with calmodulin in a calcium-dependent manner and is thus candidate for the calcium-dependent movement of the cytoskeleton at the membrane. Plays a critical role in central nervous system development and function. The polypeptide is Spectrin beta chain, non-erythrocytic 1 (SPTBN1) (Homo sapiens (Human)).